The chain runs to 60 residues: Large ribosomal subunit protein bL33 (60 aa).

The protein belongs to the bacterial ribosomal protein bL33 family.

The chain is Large ribosomal subunit protein bL33 from Chlorobium chlorochromatii (strain CaD3).